A 755-amino-acid chain; its full sequence is Putative two-component response regulator-like APRR6 (755 aa).

Residues 14–128 form the Response regulatory domain; sequence SILLIDHDTA…DIKNMWQHVF (115 aa).

The protein belongs to the ARR-like family.

The protein localises to the nucleus. The sequence is that of Putative two-component response regulator-like APRR6 (APRR6) from Arabidopsis thaliana (Mouse-ear cress).